The primary structure comprises 372 residues: 2,7-anhydro-N-acetylneuraminate hydratase (372 aa).

NAD(+) is bound by residues Tyr11, Phe12, Asp33, Asn36, Thr68, Asn70, His73, Glu90, Lys91, and Trp160.

It belongs to the Gfo/Idh/MocA family. In terms of assembly, homodimer. Requires NAD(+) as cofactor.

It carries out the reaction N-acetyl-2,7-anhydro-alpha-neuraminate + H2O = N-acetyl-alpha-neuraminate. It catalyses the reaction 2-deoxy-2,3-dehydro-N-acetylneuraminate + H2O = N-acetyl-alpha-neuraminate. All conversions require NAD(+) as a cofactor, which is regenerated in the reaction. The presence of EGTA and several divalent cations does not affect the activity. Its function is as follows. Hydratase involved in the degradation of sialic acids. Catalyzes the reversible conversion of the dehydrated form of N-acetylneuraminate (Neu5Ac), 2,7-anhydro-N-acetylneuraminate (2,7-AN), to Neu5Ac. Also catalyzes the irreversible conversion of 2-deoxy-2,3-didehydro-N-acetylneuraminate (2,3-EN) to Neu5Ac. The reaction mechanism involves keto intermediates and the transient formation of NADH. This chain is 2,7-anhydro-N-acetylneuraminate hydratase, found in Escherichia coli (strain K12).